The chain runs to 41 residues: Photosystem II reaction center protein Y (41 aa).

An N-formylmethionine modification is found at Met1. Residues 1 to 4 (MDWR) are Lumenal-facing. The helical transmembrane segment at 5–23 (VLVVLLPVLLAAGWAVRNI) threads the bilayer. The Cytoplasmic portion of the chain corresponds to 24 to 41 (LPYAVKQVQKLLQKAKAA).

It belongs to the PsbY family. As to quaternary structure, PSII is composed of 1 copy each of membrane proteins PsbA, PsbB, PsbC, PsbD, PsbE, PsbF, PsbH, PsbI, PsbJ, PsbK, PsbL, PsbM, PsbT, PsbX, PsbY, PsbZ, Psb30/Ycf12, peripheral proteins PsbO, CyanoQ (PsbQ), PsbU, PsbV and a large number of cofactors. It forms dimeric complexes. This protein is only loosely associated with PSII, and is not often found in crystals. Found on the exterior of the PSII dimer, near cytochrome b559 (psbE and psbF). PSII binds multiple chlorophylls, carotenoids and specific lipids. serves as cofactor.

It is found in the cellular thylakoid membrane. Functionally, loosely associated component of the core of photosystem II, it is not always seen in crystals. PSII is a light-driven water plastoquinone oxidoreductase, using light energy to abstract electrons from H(2)O, generating a proton gradient subsequently used for ATP formation. The sequence is that of Photosystem II reaction center protein Y from Thermosynechococcus vestitus (strain NIES-2133 / IAM M-273 / BP-1).